We begin with the raw amino-acid sequence, 197 residues long: Beta-crystallin A2 (197 aa).

An N-terminal arm region spans residues methionine 1–proline 11. Beta/gamma crystallin 'Greek key' domains lie at alanine 12 to asparagine 52 and glycine 53 to leucine 99. The interval cysteine 100–aspartate 105 is connecting peptide. Beta/gamma crystallin 'Greek key' domains are found at residues serine 106–serine 147 and glycine 148–glutamine 196.

This sequence belongs to the beta/gamma-crystallin family. As to quaternary structure, homo/heterodimer, or complexes of higher-order. The structure of beta-crystallin oligomers seems to be stabilized through interactions between the N-terminal arms.

In terms of biological role, crystallins are the dominant structural components of the vertebrate eye lens. This Oryctolagus cuniculus (Rabbit) protein is Beta-crystallin A2 (CRYBA2).